Consider the following 242-residue polypeptide: UDP-2,3-diacylglucosamine hydrolase (242 aa).

5 residues coordinate Mn(2+): Asp-8, His-10, Asp-41, Asn-79, and His-114. Position 79–80 (79–80 (NR)) interacts with substrate. Positions 122, 164, 167, and 195 each coordinate substrate. Residues His-195 and His-197 each contribute to the Mn(2+) site.

The protein belongs to the LpxH family. The cofactor is Mn(2+).

The protein resides in the cell inner membrane. It catalyses the reaction UDP-2-N,3-O-bis[(3R)-3-hydroxytetradecanoyl]-alpha-D-glucosamine + H2O = 2-N,3-O-bis[(3R)-3-hydroxytetradecanoyl]-alpha-D-glucosaminyl 1-phosphate + UMP + 2 H(+). It participates in glycolipid biosynthesis; lipid IV(A) biosynthesis; lipid IV(A) from (3R)-3-hydroxytetradecanoyl-[acyl-carrier-protein] and UDP-N-acetyl-alpha-D-glucosamine: step 4/6. In terms of biological role, hydrolyzes the pyrophosphate bond of UDP-2,3-diacylglucosamine to yield 2,3-diacylglucosamine 1-phosphate (lipid X) and UMP by catalyzing the attack of water at the alpha-P atom. Involved in the biosynthesis of lipid A, a phosphorylated glycolipid that anchors the lipopolysaccharide to the outer membrane of the cell. This is UDP-2,3-diacylglucosamine hydrolase from Vibrio parahaemolyticus serotype O3:K6 (strain RIMD 2210633).